We begin with the raw amino-acid sequence, 314 residues long: Hydrolase 4 (314 aa).

Residues 73–75 (HGA) carry the Involved in the stabilization of the negatively charged intermediate by the formation of the oxyanion hole motif. Catalysis depends on residues S165 and D260.

Belongs to the 'GDXG' lipolytic enzyme family.

The protein operates within alkaloid biosynthesis. Its function is as follows. Component of the seco-iridoid and derivatives monoterpenoid indole alkaloids (MIAs, e.g. vincadifformine) biosynthesis pathway. Catalyzes the conversion of O-acetylstemmadenine (OAS) to vincadifformine. May also trigger the formation of additional unknown MIAs. In Catharanthus roseus (Madagascar periwinkle), this protein is Hydrolase 4.